Here is a 352-residue protein sequence, read N- to C-terminus: Photosystem II D2 protein (352 aa).

Residues 40–60 (CAYLALGGWLTGTTFVTSWYT) form a helical membrane-spanning segment. A chlorophyll a-binding site is contributed by His-117. The chain crosses the membrane as a helical span at residues 124–140 (GFMLRQFEIARLVGVRP). Positions 129 and 142 each coordinate pheophytin a. The helical transmembrane segment at 152–165 (VFVSVFLIYPLGQS) threads the bilayer. His-197 is a chlorophyll a binding site. Residues 207-227 (GALLCAIHGATVENTLFQDGE) traverse the membrane as a helical segment. 2 residues coordinate a plastoquinone: His-214 and Phe-261. His-214 provides a ligand contact to Fe cation. His-268 contacts Fe cation. The helical transmembrane segment at 278 to 294 (GLWMSSIGVVGLALNLR) threads the bilayer.

Belongs to the reaction center PufL/M/PsbA/D family. In terms of assembly, PSII is composed of 1 copy each of membrane proteins PsbA, PsbB, PsbC, PsbD, PsbE, PsbF, PsbH, PsbI, PsbJ, PsbK, PsbL, PsbM, PsbT, PsbX, PsbY, PsbZ, Psb30/Ycf12, peripheral proteins PsbO, CyanoQ (PsbQ), PsbU, PsbV and a large number of cofactors. It forms dimeric complexes. It depends on The D1/D2 heterodimer binds P680, chlorophylls that are the primary electron donor of PSII, and subsequent electron acceptors. It shares a non-heme iron and each subunit binds pheophytin, quinone, additional chlorophylls, carotenoids and lipids. There is also a Cl(-1) ion associated with D1 and D2, which is required for oxygen evolution. The PSII complex binds additional chlorophylls, carotenoids and specific lipids. as a cofactor.

It is found in the cellular thylakoid membrane. It carries out the reaction 2 a plastoquinone + 4 hnu + 2 H2O = 2 a plastoquinol + O2. Functionally, photosystem II (PSII) is a light-driven water:plastoquinone oxidoreductase that uses light energy to abstract electrons from H(2)O, generating O(2) and a proton gradient subsequently used for ATP formation. It consists of a core antenna complex that captures photons, and an electron transfer chain that converts photonic excitation into a charge separation. The D1/D2 (PsbA/PsbD) reaction center heterodimer binds P680, the primary electron donor of PSII as well as several subsequent electron acceptors. D2 is needed for assembly of a stable PSII complex. The sequence is that of Photosystem II D2 protein from Synechococcus sp. (strain JA-2-3B'a(2-13)) (Cyanobacteria bacterium Yellowstone B-Prime).